Consider the following 432-residue polypeptide: Elongation factor 1-gamma (432 aa).

A GST N-terminal domain is found at 1-82 (LYTYPENWRA…YVSNEELRGS (82 aa)). Positions 83-211 (TPEAAAQVVQ…VKLCEKMAQF (129 aa)) constitute a GST C-terminal domain. An N6-acetyllysine mark is found at K142 and K207. Positions 216-249 (FAESQPKKDTPRKEKGSREEKQKPQAERKEEKKA) are enriched in basic and acidic residues. The disordered stretch occupies residues 216–258 (FAESQPKKDTPRKEKGSREEKQKPQAERKEEKKAAAPAPEEEL). K248 participates in a covalent cross-link: Glycyl lysine isopeptide (Lys-Gly) (interchain with G-Cter in SUMO1). The EF-1-gamma C-terminal domain maps to 271–432 (AKDPFAHLPK…KAFNQGKIFK (162 aa)). Residue K280 forms a Glycyl lysine isopeptide (Lys-Gly) (interchain with G-Cter in SUMO2) linkage. N6-acetyllysine is present on K396. K429 bears the N6-acetyllysine; alternate mark. K429 is subject to N6-malonyllysine; alternate.

In terms of assembly, EF-1 is composed of four subunits: alpha, beta, delta, and gamma.

Probably plays a role in anchoring the complex to other cellular components. This chain is Elongation factor 1-gamma (EEF1G), found in Sus scrofa (Pig).